An 89-amino-acid polypeptide reads, in one-letter code: Large ribosomal subunit protein bL27 (89 aa).

Residues 1–21 (MAHKKAGGSSRNGRDTEGRRL) are disordered.

It belongs to the bacterial ribosomal protein bL27 family.

This is Large ribosomal subunit protein bL27 from Granulibacter bethesdensis (strain ATCC BAA-1260 / CGDNIH1).